The chain runs to 108 residues: Large ribosomal subunit protein bL31B (108 aa).

The segment at 86–108 (KPETVVEDVLPKGKKKSPAKKKK) is disordered. Residues 97-108 (KGKKKSPAKKKK) are compositionally biased toward basic residues.

It belongs to the bacterial ribosomal protein bL31 family. Type B subfamily. Part of the 50S ribosomal subunit.

This is Large ribosomal subunit protein bL31B from Chlamydia trachomatis serovar L2 (strain ATCC VR-902B / DSM 19102 / 434/Bu).